A 1145-amino-acid chain; its full sequence is DNA-directed RNA polymerase subunit beta (1145 aa).

The segment covering 1101–1112 has biased composition (basic and acidic residues); the sequence is LPEERRVSSSKE. Residues 1101-1145 are disordered; sequence LPEERRVSSSKEEIEEEEEVEDNSDEFDETFLEEAEDDFSLDDED. Over residues 1113-1145 the composition is skewed to acidic residues; that stretch reads EIEEEEEVEDNSDEFDETFLEEAEDDFSLDDED.

It belongs to the RNA polymerase beta chain family. In terms of assembly, the RNAP catalytic core consists of 2 alpha, 1 beta, 1 beta' and 1 omega subunit. When a sigma factor is associated with the core the holoenzyme is formed, which can initiate transcription.

The catalysed reaction is RNA(n) + a ribonucleoside 5'-triphosphate = RNA(n+1) + diphosphate. DNA-dependent RNA polymerase catalyzes the transcription of DNA into RNA using the four ribonucleoside triphosphates as substrates. This Desulforamulus reducens (strain ATCC BAA-1160 / DSM 100696 / MI-1) (Desulfotomaculum reducens) protein is DNA-directed RNA polymerase subunit beta.